Reading from the N-terminus, the 668-residue chain is Hemocyanin subunit D (668 aa).

The signal sequence occupies residues M1–S22. Cu cation-binding residues include H206, H210, and H236. The N-linked (GlcNAc...) asparagine glycan is linked to N322. Residues H357, H361, and H397 each coordinate Cu cation. An intrachain disulfide couples C567 to C614.

The protein belongs to the tyrosinase family. Hemocyanin subfamily. 36-chain polymer consisting of 6 hexamers, each of which includes 4 different chains, A, B, C and D. Hemolymph.

It localises to the secreted. It is found in the extracellular space. Hemocyanins are copper-containing oxygen carriers occurring freely dissolved in the hemolymph of many mollusks and arthropods. The protein is Hemocyanin subunit D (HCD) of Scutigera coleoptrata (House centipede).